The chain runs to 499 residues: Probable cytosol aminopeptidase (499 aa).

Mn(2+) is bound by residues Lys-268 and Asp-273. Lys-280 is an active-site residue. The Mn(2+) site is built by Asp-291, Asp-350, and Glu-352. Residue Arg-354 is part of the active site.

It belongs to the peptidase M17 family. Requires Mn(2+) as cofactor.

The protein resides in the cytoplasm. The catalysed reaction is Release of an N-terminal amino acid, Xaa-|-Yaa-, in which Xaa is preferably Leu, but may be other amino acids including Pro although not Arg or Lys, and Yaa may be Pro. Amino acid amides and methyl esters are also readily hydrolyzed, but rates on arylamides are exceedingly low.. It catalyses the reaction Release of an N-terminal amino acid, preferentially leucine, but not glutamic or aspartic acids.. Its function is as follows. Presumably involved in the processing and regular turnover of intracellular proteins. Catalyzes the removal of unsubstituted N-terminal amino acids from various peptides. The sequence is that of Probable cytosol aminopeptidase from Halorhodospira halophila (strain DSM 244 / SL1) (Ectothiorhodospira halophila (strain DSM 244 / SL1)).